Here is a 139-residue protein sequence, read N- to C-terminus: ATP synthase epsilon chain (139 aa).

The protein belongs to the ATPase epsilon chain family. F-type ATPases have 2 components, CF(1) - the catalytic core - and CF(0) - the membrane proton channel. CF(1) has five subunits: alpha(3), beta(3), gamma(1), delta(1), epsilon(1). CF(0) has three main subunits: a, b and c.

Its subcellular location is the cell membrane. Functionally, produces ATP from ADP in the presence of a proton gradient across the membrane. The protein is ATP synthase epsilon chain of Pediococcus pentosaceus (strain ATCC 25745 / CCUG 21536 / LMG 10740 / 183-1w).